The chain runs to 250 residues: MAILGLQGVRGGVGTTSLTAALAWALQILGENVLVIDASPDNLLRMSFNVDFVHQGGWARSLLDGQDWRDAGLRYTSQLDLLPFGQLTSQEWENPQAWQETLGEIGSAIQALKASGRYSWILLDLPYGESPLTRQLVSLCDHTLAIAQVDANCHIRLHQQALPAGAHILINDLRIGSQLQDDLYQVWLQSQRRLLPIVIHRDEAMAECMASKQPLGEYRSDSLAAEEVLTLANWCLLHDAGDKTSAGSLR.

9 to 16 (VRGGVGTT) serves as a coordination point for ATP.

Belongs to the BcsQ family.

It localises to the cytoplasm. Its function is as follows. Essential for cellulose biosynthesis. May play a role in subcellular localization of an active cellulose biosynthesis apparatus at the bacterial cell pole. This is Cellulose biosynthesis protein BcsQ (bcsQ) from Salmonella typhi.